Here is a 224-residue protein sequence, read N- to C-terminus: MNIQFESAGVSFGARVALEPLTLAITGKRIGVIGLNGSGKTTFARLINGLTKPTTGRVIVNGRDTADEKTVVTDVGFIFQSPQNQIILPIVKDDIAFGLKRRGLSKAEIEARVEGVLARFGAEALADRRAHELSGGELQVAALCSVLATGPGILILDEPTNQLDLKNRALVERIIAGLPESAIVITHDLELIAGFERVLVFHEGRLAADEPAAEAIARYREIAA.

An ABC transporter domain is found at 3-224; the sequence is IQFESAGVSF…AIARYREIAA (222 aa). 34-41 lines the ATP pocket; that stretch reads GLNGSGKT.

The protein belongs to the ABC transporter superfamily. In terms of assembly, part of a biotin transporter complex composed of BioM, BioN and BioY.

It is found in the cell inner membrane. Functionally, involved in biotin uptake. The sequence is that of Biotin transport ATP-binding protein BioM (bioM) from Rhizobium etli (strain ATCC 51251 / DSM 11541 / JCM 21823 / NBRC 15573 / CFN 42).